A 447-amino-acid polypeptide reads, in one-letter code: Cysteine--tRNA ligase (447 aa).

Residue C28 coordinates Zn(2+). A 'HIGH' region motif is present at residues P30 to N40. Zn(2+)-binding residues include C211, H236, and E240. Positions K268–S272 match the 'KMSKS' region motif. An ATP-binding site is contributed by K271.

The protein belongs to the class-I aminoacyl-tRNA synthetase family. In terms of assembly, monomer. Requires Zn(2+) as cofactor.

The protein localises to the cytoplasm. It carries out the reaction tRNA(Cys) + L-cysteine + ATP = L-cysteinyl-tRNA(Cys) + AMP + diphosphate. The chain is Cysteine--tRNA ligase from Streptococcus pyogenes serotype M1.